The following is a 257-amino-acid chain: S-methyl-5'-thioadenosine phosphorylase (257 aa).

Residues S10 and 50–51 contribute to the phosphate site; that span reads RH. Position 180 (M180) interacts with substrate. A phosphate-binding site is contributed by T181. 204–206 serves as a coordination point for substrate; that stretch reads DYD.

Belongs to the PNP/MTAP phosphorylase family. MTAP subfamily. Homohexamer. Dimer of a homotrimer.

The catalysed reaction is S-methyl-5'-thioadenosine + phosphate = 5-(methylsulfanyl)-alpha-D-ribose 1-phosphate + adenine. The protein operates within amino-acid biosynthesis; L-methionine biosynthesis via salvage pathway; S-methyl-5-thio-alpha-D-ribose 1-phosphate from S-methyl-5'-thioadenosine (phosphorylase route): step 1/1. In terms of biological role, catalyzes the reversible phosphorylation of S-methyl-5'-thioadenosine (MTA) to adenine and 5-methylthioribose-1-phosphate. Involved in the breakdown of MTA, a major by-product of polyamine biosynthesis. Responsible for the first step in the methionine salvage pathway after MTA has been generated from S-adenosylmethionine. Has broad substrate specificity with 6-aminopurine nucleosides as preferred substrates. This chain is S-methyl-5'-thioadenosine phosphorylase (mntP), found in Pyrococcus abyssi (strain GE5 / Orsay).